We begin with the raw amino-acid sequence, 558 residues long: Formate--tetrahydrofolate ligase (558 aa).

67–74 lines the ATP pocket; it reads TPAGEGKT.

The protein belongs to the formate--tetrahydrofolate ligase family.

It carries out the reaction (6S)-5,6,7,8-tetrahydrofolate + formate + ATP = (6R)-10-formyltetrahydrofolate + ADP + phosphate. It functions in the pathway one-carbon metabolism; tetrahydrofolate interconversion. This Roseobacter denitrificans (strain ATCC 33942 / OCh 114) (Erythrobacter sp. (strain OCh 114)) protein is Formate--tetrahydrofolate ligase.